The sequence spans 92 residues: Small ribosomal subunit protein uS19 (92 aa).

Belongs to the universal ribosomal protein uS19 family.

Its function is as follows. Protein S19 forms a complex with S13 that binds strongly to the 16S ribosomal RNA. This chain is Small ribosomal subunit protein uS19, found in Bifidobacterium longum subsp. infantis (strain ATCC 15697 / DSM 20088 / JCM 1222 / NCTC 11817 / S12).